Reading from the N-terminus, the 967-residue chain is Probable serine/threonine-protein kinase DDB_G0290621 (967 aa).

Disordered stretches follow at residues 65 to 122 (EDSD…KEKE), 215 to 251 (SSLS…SSSS), and 287 to 326 (QQQL…SPRT). Residues 66–94 (DSDEDDDDEEDEEDEEDSDEEEDDDVVED) are compositionally biased toward acidic residues. Residues 95–122 (DNTKDIGKSRDSDKSIKGKEKGKEKEKE) show a composition bias toward basic and acidic residues. A compositionally biased stretch (low complexity) spans 297–326 (QQQQQQQQQQQQQNNSMLQQSNNNNISPRT). The Protein kinase domain maps to 345-610 (FNDSNKIGEG…EIRSRLSEII (266 aa)). ATP contacts are provided by residues 351 to 359 (IGEGGQCSI) and lysine 368. The active-site Proton acceptor is the aspartate 467. 3 disordered regions span residues 634 to 667 (DDSL…NNNN), 700 to 752 (STSN…NNNI), and 862 to 882 (TSSS…NPSN). Low complexity predominate over residues 639-666 (NNNNNNNQNNNNQNNNNNNNNNNNNNNN). A compositionally biased stretch (low complexity) spans 863-882 (SSSSNKNNNNNNNDNNNPSN).

The protein belongs to the protein kinase superfamily. TKL Ser/Thr protein kinase family.

The enzyme catalyses L-seryl-[protein] + ATP = O-phospho-L-seryl-[protein] + ADP + H(+). It catalyses the reaction L-threonyl-[protein] + ATP = O-phospho-L-threonyl-[protein] + ADP + H(+). This is Probable serine/threonine-protein kinase DDB_G0290621 from Dictyostelium discoideum (Social amoeba).